The sequence spans 362 residues: 3-dehydroquinate synthase (362 aa).

This sequence belongs to the archaeal-type DHQ synthase family.

The enzyme catalyses 2-amino-2,3,7-trideoxy-D-lyxo-hept-6-ulosonate + NAD(+) + H2O = 3-dehydroquinate + NH4(+) + NADH + H(+). Its function is as follows. Catalyzes the oxidative deamination and cyclization of 2-amino-3,7-dideoxy-D-threo-hept-6-ulosonic acid (ADH) to yield 3-dehydroquinate (DHQ), which is fed into the canonical shikimic pathway of aromatic amino acid biosynthesis. The chain is 3-dehydroquinate synthase from Methanothrix thermoacetophila (strain DSM 6194 / JCM 14653 / NBRC 101360 / PT) (Methanosaeta thermophila).